The chain runs to 489 residues: Adenylosuccinate synthetase 2, chloroplastic (489 aa).

A chloroplast-targeting transit peptide spans 1–45 (MPFSPPCLDPAAAAAASLSFLPAAAARPPAPCAVAPRSRRALRVA). Residues 76–82 (GDEGKGK) and 104–106 (GHT) each bind GTP. The active-site Proton acceptor is Asp77. Positions 77 and 104 each coordinate Mg(2+). Residues 77 to 80 (DEGK), 102 to 105 (NAGH), Thr194, Arg208, Gln288, Thr303, and Arg367 each bind IMP. Catalysis depends on His105, which acts as the Proton donor. 363–369 (TTTGRPR) is a substrate binding site. GTP is bound by residues Arg369, 395-397 (KLD), and 478-480 (GVG).

Belongs to the adenylosuccinate synthetase family. In terms of assembly, homodimer. Mg(2+) is required as a cofactor.

It is found in the plastid. It localises to the chloroplast. It carries out the reaction IMP + L-aspartate + GTP = N(6)-(1,2-dicarboxyethyl)-AMP + GDP + phosphate + 2 H(+). The protein operates within purine metabolism; AMP biosynthesis via de novo pathway; AMP from IMP: step 1/2. Its function is as follows. Plays an important role in the de novo pathway and in the salvage pathway of purine nucleotide biosynthesis. Catalyzes the first committed step in the biosynthesis of AMP from IMP. The chain is Adenylosuccinate synthetase 2, chloroplastic from Oryza sativa subsp. japonica (Rice).